A 149-amino-acid chain; its full sequence is Calmodulin (149 aa).

Position 2 is an N-acetylalanine (A2). 4 EF-hand domains span residues 8–43 (EQIAEFKEAFSLFDKDGDGTITTKELGTVMRSLGQN), 44–79 (PTEAELQDMINEVNADGNGTIDFPEFLTMMARKMKD), 81–116 (DSEEEIREAFRVFDKDGNGYISAAELRHVMTNLGEK), and 117–149 (LTDEEVDEMIREADIDGDGQVNYEEFVQMMTAK). Residues D21, D23, D25, T27, E32, D59, N61, T63, E68, D94, D96, N98, Y100, and E105 each coordinate Ca(2+). Residue K116 is modified to N6,N6,N6-trimethyllysine. 5 residues coordinate Ca(2+): D130, D132, D134, Q136, and E141.

Belongs to the calmodulin family.

In terms of biological role, calmodulin acts as part of a calcium signal transduction pathway by mediating the control of a large number of enzymes, ion channels, aquaporins and other proteins through calcium-binding. Calcium-binding is required for the activation of calmodulin. Among the enzymes to be stimulated by the calmodulin-calcium complex are a number of protein kinases, such as myosin light-chain kinases and calmodulin-dependent protein kinase type II (CaMK2), and phosphatases. The polypeptide is Calmodulin (Myxine glutinosa (Atlantic hagfish)).